Consider the following 1181-residue polypeptide: HEAT repeat-containing protein 6 (1181 aa).

One copy of the HEAT 1 repeat lies at 159 to 198 (PELLGNTGLLMKLSDLAQSDPEVRRAAVHCMANLCLSVPG). Disordered stretches follow at residues 292-347 (QYDG…PVTG) and 371-390 (LDGSGAAEKDGVSSSFSSSS). A compositionally biased stretch (polar residues) spans 300 to 312 (KPQQSESSASRPT). The span at 313-325 (LNKKKKSKVKPKK) shows a compositional bias: basic residues. A phosphoserine mark is found at Ser336 and Ser337. Ser399 and Ser402 each carry phosphoserine. HEAT repeat units follow at residues 452 to 490 (ELGSPQSVSLMTLTLKDPSPKTRACALQVLSAILEGSKQ), 515 to 552 (SIRELHRCLLLALVAESSSQTVTQIIKCLANLVSNAPY), and 558 to 595 (SLLTKVWNQIKPYIRHKDVNVRVSSLTLLGAIVSTHAP). The interval 613 to 646 (NSNSATPHLSPPDWWKKAPAGPSLEETSVSSPKG) is disordered. Position 618 is a phosphothreonine (Thr618). Over residues 637–646 (EETSVSSPKG) the composition is skewed to polar residues. At Ser643 the chain carries Phosphoserine.

Amplified in breast cancer cell lines MCF-7 and BT-474.

Amplification-dependent oncogene. The protein is HEAT repeat-containing protein 6 (HEATR6) of Homo sapiens (Human).